Reading from the N-terminus, the 355-residue chain is Oligopeptide transport ATP-binding protein AmiE (355 aa).

The ABC transporter domain occupies 9–260; sequence LTARDIVVEF…PRHPYTWSLL (252 aa). 45–52 contacts ATP; the sequence is GESGSGKS.

Belongs to the ABC transporter superfamily.

Its subcellular location is the cell membrane. In terms of biological role, part of the binding-protein-dependent transport system for oligopeptides. Probably responsible for energy coupling to the transport system. In Streptococcus pneumoniae serotype 4 (strain ATCC BAA-334 / TIGR4), this protein is Oligopeptide transport ATP-binding protein AmiE (amiE).